We begin with the raw amino-acid sequence, 188 residues long: GTP cyclohydrolase 1 (188 aa).

Positions 76, 79, and 148 each coordinate Zn(2+).

This sequence belongs to the GTP cyclohydrolase I family. As to quaternary structure, homomer.

The catalysed reaction is GTP + H2O = 7,8-dihydroneopterin 3'-triphosphate + formate + H(+). Its pathway is cofactor biosynthesis; 7,8-dihydroneopterin triphosphate biosynthesis; 7,8-dihydroneopterin triphosphate from GTP: step 1/1. The chain is GTP cyclohydrolase 1 from Thermoanaerobacter pseudethanolicus (strain ATCC 33223 / 39E) (Clostridium thermohydrosulfuricum).